The primary structure comprises 646 residues: DEAD-box ATP-dependent RNA helicase 52 (646 aa).

Disordered stretches follow at residues 1 to 64 (MSSN…ANSG) and 76 to 117 (GSGY…PAVN). S2 carries the post-translational modification N-acetylserine. Gly residues-rich tracts occupy residues 54-64 (DRGGYGGANSG) and 76-87 (GSGYGGRGGPVG). A Q motif motif is present at residues 146–174 (NTFAEIDLGEALNLNIQRCKYVKPTPVQR). Residues 177 to 361 (IPILAAGRDL…SDFLSNYIFL (185 aa)) enclose the Helicase ATP-binding domain. An ATP-binding site is contributed by 190–197 (AQTGSGKT). The short motif at 305–308 (DEAD) is the DEAD box element. The 152-residue stretch at 388-539 (HLMDLLHAQR…EVPDWLTRYA (152 aa)) folds into the Helicase C-terminal domain.

This sequence belongs to the DEAD box helicase family. DDX3/DED1 subfamily.

The enzyme catalyses ATP + H2O = ADP + phosphate + H(+). In Arabidopsis thaliana (Mouse-ear cress), this protein is DEAD-box ATP-dependent RNA helicase 52 (RH52).